The following is an 83-amino-acid chain: Mu-theraphotoxin-Hhn2k (83 aa).

Residues 1–21 (MKASMFLALAGLVLLFVVDYA) form the signal peptide. The propeptide occupies 22–48 (SESEEKEFPIELLSKIFAVDVFKGEER). 3 cysteine pairs are disulfide-bonded: cysteine 50–cysteine 65, cysteine 57–cysteine 70, and cysteine 64–cysteine 77. Leucine 81 is subject to Leucine amide.

It belongs to the neurotoxin 10 (Hwtx-1) family. 15 (Hntx-3) subfamily. Monomer. In terms of tissue distribution, expressed by the venom gland.

The protein localises to the secreted. In terms of biological role, lethal neurotoxin. Selectively blocks tetrodotoxin-sensitive voltage-gated sodium channels (Nav). Does not affect tetrodotoxin-resistant voltage-gated sodium channels or calcium channels. The chain is Mu-theraphotoxin-Hhn2k from Cyriopagopus hainanus (Chinese bird spider).